Reading from the N-terminus, the 503-residue chain is Maturase K (503 aa).

Belongs to the intron maturase 2 family. MatK subfamily.

It is found in the plastid. Its subcellular location is the chloroplast. Its function is as follows. Usually encoded in the trnK tRNA gene intron. Probably assists in splicing its own and other chloroplast group II introns. The sequence is that of Maturase K from Liquidambar formosana (Formosan gum).